We begin with the raw amino-acid sequence, 335 residues long: Glyceraldehyde-3-phosphate dehydrogenase 1 (335 aa).

Residues 12–13 (RI), Asp-34, Arg-78, and Ser-120 each bind NAD(+). D-glyceraldehyde 3-phosphate-binding positions include 151 to 153 (SCT) and Thr-182. Cys-152 (nucleophile) is an active-site residue. Asn-183 serves as a coordination point for NAD(+). D-glyceraldehyde 3-phosphate contacts are provided by residues Arg-197, 210–211 (TG), and Arg-233. Asn-315 provides a ligand contact to NAD(+).

It belongs to the glyceraldehyde-3-phosphate dehydrogenase family. As to quaternary structure, homotetramer. Interacts with BrxC. Post-translationally, in response to oxidative stress, the active site Cys likely reacts with bacillithiol (BSH) to form mixed disulfides to protect the Cys residue against overoxidation. S-bacillithiolation presumably leads to loss of catalytic activity. Debacillithiolation by monothiol bacilliredoxin BrxC restores the activity.

It is found in the cytoplasm. The catalysed reaction is D-glyceraldehyde 3-phosphate + phosphate + NAD(+) = (2R)-3-phospho-glyceroyl phosphate + NADH + H(+). It functions in the pathway carbohydrate degradation; glycolysis; pyruvate from D-glyceraldehyde 3-phosphate: step 1/5. Functionally, involved in the glycolysis. Catalyzes the oxidative phosphorylation of glyceraldehyde 3-phosphate (G3P) to 1,3-bisphosphoglycerate (BPG) using the cofactor NAD. The first reaction step involves the formation of a hemiacetal intermediate between G3P and a cysteine residue, and this hemiacetal intermediate is then oxidized to a thioester, with concomitant reduction of NAD to NADH. The reduced NADH is then exchanged with the second NAD, and the thioester is attacked by a nucleophilic inorganic phosphate to produce BPG. The chain is Glyceraldehyde-3-phosphate dehydrogenase 1 from Bacillus subtilis (strain 168).